Consider the following 72-residue polypeptide: Translation initiation factor IF-1 (72 aa).

The S1-like domain occupies 1 to 72 (MAKEDVIEFS…TKGRITFRYK (72 aa)).

The protein belongs to the IF-1 family. Component of the 30S ribosomal translation pre-initiation complex which assembles on the 30S ribosome in the order IF-2 and IF-3, IF-1 and N-formylmethionyl-tRNA(fMet); mRNA recruitment can occur at any time during PIC assembly.

It is found in the cytoplasm. In terms of biological role, one of the essential components for the initiation of protein synthesis. Stabilizes the binding of IF-2 and IF-3 on the 30S subunit to which N-formylmethionyl-tRNA(fMet) subsequently binds. Helps modulate mRNA selection, yielding the 30S pre-initiation complex (PIC). Upon addition of the 50S ribosomal subunit IF-1, IF-2 and IF-3 are released leaving the mature 70S translation initiation complex. This Paramagnetospirillum magneticum (strain ATCC 700264 / AMB-1) (Magnetospirillum magneticum) protein is Translation initiation factor IF-1.